The sequence spans 440 residues: G-protein coupled receptor family C group 5 member C (440 aa).

The first 22 residues, 1-22, serve as a signal peptide directing secretion; it reads MATHRTLLMCLGLPLFFPGALA. The Extracellular portion of the chain corresponds to 23 to 49; it reads QNHAPPGCSPDLDPLYYNLCDRSGAWG. The chain crosses the membrane as a helical span at residues 50–70; the sequence is IVSEAVAGAGIITTFVLTIIL. At 71–84 the chain is on the cytoplasmic side; the sequence is VASLPFVQDTKKRS. Residues 85 to 105 form a helical membrane-spanning segment; the sequence is LLGTQVFFLLGTLGLFCLVFA. Residues 106 to 119 are Extracellular-facing; that stretch reads CVVKPDFSTCASRR. Residues 120–140 form a helical membrane-spanning segment; it reads FLFGVLFAICFSCLVAHVLSL. Residues 141–155 lie on the Cytoplasmic side of the membrane; it reads NFLTRKNHGPRGWVI. The helical transmembrane segment at 156–176 threads the bilayer; that stretch reads FTVALLLTLVEVIINTEWLII. Topologically, residues 177–207 are extracellular; that stretch reads TLVRGGGQVSPLGNVSADSTMTSPCAIANMD. Residue asparagine 190 is glycosylated (N-linked (GlcNAc...) asparagine). Residues 208–228 form a helical membrane-spanning segment; the sequence is FVMALIYVMLLLLTAFLGAWP. The Cytoplasmic portion of the chain corresponds to 229–240; it reads TLCGRFKRWRKH. The helical transmembrane segment at 241–261 threads the bilayer; that stretch reads GVFVLLTTVISIAIWVVWIVM. Over 262–278 the chain is Extracellular; the sequence is YTYGNEQHHSPTWDDPT. A helical membrane pass occupies residues 279 to 299; the sequence is LAIALAANAWTFVLFYVIPEV. Over 300–440 the chain is Cytoplasmic; that stretch reads SQVTKPSPEQ…QVFRNPYVWD (141 aa). 4 positions are modified to phosphoserine: serine 343, serine 382, serine 402, and serine 405. Tyrosine 413 carries the phosphotyrosine modification. The residue at position 422 (threonine 422) is a Phosphothreonine.

It belongs to the G-protein coupled receptor 3 family.

The protein localises to the cell membrane. Its function is as follows. This retinoic acid-inducible G-protein coupled receptor provide evidence for a possible interaction between retinoid and G-protein signaling pathways. The protein is G-protein coupled receptor family C group 5 member C (Gprc5c) of Mus musculus (Mouse).